A 262-amino-acid chain; its full sequence is Small ribosomal subunit protein uS2 (262 aa).

A disordered region spans residues glycine 224 to aspartate 262.

The protein belongs to the universal ribosomal protein uS2 family.

This Limosilactobacillus reuteri (strain DSM 20016) (Lactobacillus reuteri) protein is Small ribosomal subunit protein uS2.